The chain runs to 284 residues: Ribosomal RNA small subunit methyltransferase A (284 aa).

Residues asparagine 33, leucine 35, glycine 60, glutamate 81, aspartate 101, and asparagine 124 each coordinate S-adenosyl-L-methionine.

This sequence belongs to the class I-like SAM-binding methyltransferase superfamily. rRNA adenine N(6)-methyltransferase family. RsmA subfamily.

Its subcellular location is the cytoplasm. The enzyme catalyses adenosine(1518)/adenosine(1519) in 16S rRNA + 4 S-adenosyl-L-methionine = N(6)-dimethyladenosine(1518)/N(6)-dimethyladenosine(1519) in 16S rRNA + 4 S-adenosyl-L-homocysteine + 4 H(+). Its function is as follows. Specifically dimethylates two adjacent adenosines (A1518 and A1519) in the loop of a conserved hairpin near the 3'-end of 16S rRNA in the 30S particle. May play a critical role in biogenesis of 30S subunits. The sequence is that of Ribosomal RNA small subunit methyltransferase A from Chlamydia felis (strain Fe/C-56) (Chlamydophila felis).